Here is a 133-residue protein sequence, read N- to C-terminus: MRRHKSKSIPGRNLRLADQIQKDLAGIIQREIDMTRAGLITLSGVELSADYAHAKVYFTVLGAEPDTAAALLNEKAGWLHSQLYKLLHIHTVPTLRFVHDLQITRGIEMSVLIDRANRPGPHSGVPDEPEDQS.

It belongs to the RbfA family. As to quaternary structure, monomer. Binds 30S ribosomal subunits, but not 50S ribosomal subunits or 70S ribosomes.

It localises to the cytoplasm. Its function is as follows. One of several proteins that assist in the late maturation steps of the functional core of the 30S ribosomal subunit. Associates with free 30S ribosomal subunits (but not with 30S subunits that are part of 70S ribosomes or polysomes). Required for efficient processing of 16S rRNA. May interact with the 5'-terminal helix region of 16S rRNA. The polypeptide is Ribosome-binding factor A (Bordetella parapertussis (strain 12822 / ATCC BAA-587 / NCTC 13253)).